The following is a 796-amino-acid chain: Nuclear cap-binding protein subunit 1 (796 aa).

The segment at 1–26 (MSRRRHSDGDDGGQSHKRRRTSEPVE) is disordered. The MIF4G domain occupies 28–240 (EDRLESLICR…CLYAQIQKLK (213 aa)). Residues 641–719 (LHSTIRKMNK…SEQKNLFLVI (79 aa)) are a coiled coil. The segment at 664–695 (DKLERQQHKKQKDSGDEEDMEKNSEDEDGQLE) is disordered. A compositionally biased stretch (acidic residues) spans 678 to 695 (GDEEDMEKNSEDEDGQLE).

This sequence belongs to the NCBP1 family. Component of the nuclear cap-binding complex (CBC), a heterodimer composed of ncbp1/cbp80 and ncbp2/cbp20 that interacts with m7GpppG-capped RNA. Component of an alternative nuclear cap-binding complex (CBC) composed of ncbp1/cbp80 and ncbp3.

It is found in the nucleus. The protein resides in the cytoplasm. In terms of biological role, component of the cap-binding complex (CBC), which binds cotranscriptionally to the 5'-cap of pre-mRNAs and is involved in various processes such as pre-mRNA splicing, translation regulation, nonsense-mediated mRNA decay, RNA-mediated gene silencing (RNAi) by microRNAs (miRNAs) and mRNA export. The CBC complex is involved in mRNA export from the nucleus, leading to the recruitment of the mRNA export machinery to the 5'-end of mRNA and to mRNA export in a 5' to 3' direction through the nuclear pore. The CBC complex is also involved in mediating U snRNA and intronless mRNAs export from the nucleus. The CBC complex is essential for a pioneer round of mRNA translation, before steady state translation when the CBC complex is replaced by cytoplasmic cap-binding protein eIF4E. The pioneer round of mRNA translation mediated by the CBC complex plays a central role in nonsense-mediated mRNA decay (NMD), NMD only taking place in mRNAs bound to the CBC complex, but not on eIF4E-bound mRNAs. The CBC complex enhances NMD in mRNAs containing at least one exon-junction complex (EJC), promoting the interaction between UPF1 and UPF2. The CBC complex is also involved in 'failsafe' NMD, which is independent of the EJC complex, while it does not participate in Staufen-mediated mRNA decay (SMD). During cell proliferation, the CBC complex is also involved in microRNAs (miRNAs) biogenesis via its interaction with SRRT/ARS2 and is required for miRNA-mediated RNA interference. The CBC complex also acts as a negative regulator of parn, thereby acting as an inhibitor of mRNA deadenylation. In the CBC complex, ncbp1/cbp80 does not bind directly capped RNAs (m7GpppG-capped RNA) but is required to stabilize the movement of the N-terminal loop of ncbp2/cbp20 and lock the CBC into a high affinity cap-binding state with the cap structure. Associates with NCBP3 to form an alternative cap-binding complex (CBC) which plays a key role in mRNA export. The conventional CBC with NCBP2 binds both small nuclear RNA (snRNA) and messenger (mRNA) and is involved in their export from the nucleus whereas the alternative CBC with NCBP3 does not bind snRNA and associates only with mRNA thereby playing a role only in mRNA export. This is Nuclear cap-binding protein subunit 1 (ncbp1) from Salmo salar (Atlantic salmon).